A 263-amino-acid chain; its full sequence is 3-methyl-2-oxobutanoate hydroxymethyltransferase (263 aa).

Mg(2+) is bound by residues Asp-45 and Asp-84. Residues 45–46 (DS), Asp-84, and Lys-112 contribute to the 3-methyl-2-oxobutanoate site. Residue Glu-114 participates in Mg(2+) binding. Glu-180 acts as the Proton acceptor in catalysis.

Belongs to the PanB family. As to quaternary structure, homodecamer; pentamer of dimers. It depends on Mg(2+) as a cofactor.

The protein resides in the cytoplasm. It catalyses the reaction 3-methyl-2-oxobutanoate + (6R)-5,10-methylene-5,6,7,8-tetrahydrofolate + H2O = 2-dehydropantoate + (6S)-5,6,7,8-tetrahydrofolate. The protein operates within cofactor biosynthesis; (R)-pantothenate biosynthesis; (R)-pantoate from 3-methyl-2-oxobutanoate: step 1/2. In terms of biological role, catalyzes the reversible reaction in which hydroxymethyl group from 5,10-methylenetetrahydrofolate is transferred onto alpha-ketoisovalerate to form ketopantoate. This Salmonella enteritidis PT4 (strain P125109) protein is 3-methyl-2-oxobutanoate hydroxymethyltransferase.